The sequence spans 1025 residues: Multidrug resistance protein MdtC (1025 aa).

12 consecutive transmembrane segments (helical) span residues 3 to 23, 333 to 353, 360 to 380, 387 to 407, 431 to 451, 463 to 483, 528 to 548, 853 to 873, 875 to 895, 897 to 917, 953 to 973, and 984 to 1004; these read FFAL…AITL, EVEQ…FLFL, IIPA…MYLC, LSLM…IVVL, VGFT…PLLL, FAVT…TLTP, LVGV…ISIP, VILI…LYES, VHPL…LLAL, LFNA…IGIV, PIMM…LSGG, and ITIV…TPVV.

Belongs to the resistance-nodulation-cell division (RND) (TC 2.A.6) family. MdtC subfamily. In terms of assembly, part of a tripartite efflux system composed of MdtA, MdtB and MdtC. MdtC forms a heteromultimer with MdtB.

The protein localises to the cell inner membrane. Functionally, the MdtABC tripartite complex confers resistance against novobiocin and deoxycholate. In Escherichia coli O139:H28 (strain E24377A / ETEC), this protein is Multidrug resistance protein MdtC.